Reading from the N-terminus, the 396-residue chain is Probable peptidoglycan glycosyltransferase FtsW (396 aa).

9 helical membrane-spanning segments follow: residues 17–37 (FCDG…WVMV), 61–81 (VFVL…MAWW), 83–103 (ANGP…LVAG), 117–137 (GIPL…VYLA), 159–179 (MVMA…AVVV), 198–218 (FLLL…AEPY), 274–294 (FVFA…VIGL), 316–336 (FAAY…FINI), and 350–370 (LPLL…VGML).

The protein belongs to the SEDS family. FtsW subfamily.

It is found in the cell inner membrane. It catalyses the reaction [GlcNAc-(1-&gt;4)-Mur2Ac(oyl-L-Ala-gamma-D-Glu-L-Lys-D-Ala-D-Ala)](n)-di-trans,octa-cis-undecaprenyl diphosphate + beta-D-GlcNAc-(1-&gt;4)-Mur2Ac(oyl-L-Ala-gamma-D-Glu-L-Lys-D-Ala-D-Ala)-di-trans,octa-cis-undecaprenyl diphosphate = [GlcNAc-(1-&gt;4)-Mur2Ac(oyl-L-Ala-gamma-D-Glu-L-Lys-D-Ala-D-Ala)](n+1)-di-trans,octa-cis-undecaprenyl diphosphate + di-trans,octa-cis-undecaprenyl diphosphate + H(+). It participates in cell wall biogenesis; peptidoglycan biosynthesis. Functionally, peptidoglycan polymerase that is essential for cell division. This is Probable peptidoglycan glycosyltransferase FtsW from Halomonas elongata (strain ATCC 33173 / DSM 2581 / NBRC 15536 / NCIMB 2198 / 1H9).